A 158-amino-acid chain; its full sequence is 6,7-dimethyl-8-ribityllumazine synthase 2 (158 aa).

Residues W20, 54–56, and 78–80 contribute to the 5-amino-6-(D-ribitylamino)uracil site; these read AYE and FVI. R86 acts as the Proton donor in catalysis. S111 contributes to the 5-amino-6-(D-ribitylamino)uracil binding site. Residue H125 participates in (2S)-2-hydroxy-3-oxobutyl phosphate binding.

This sequence belongs to the DMRL synthase family. In terms of assembly, homodecamer, arranged as a dimer of pentamers.

It localises to the cytoplasm. It carries out the reaction (2S)-2-hydroxy-3-oxobutyl phosphate + 5-amino-6-(D-ribitylamino)uracil = 6,7-dimethyl-8-(1-D-ribityl)lumazine + phosphate + 2 H2O + H(+). It participates in cofactor biosynthesis; riboflavin biosynthesis; riboflavin from 2-hydroxy-3-oxobutyl phosphate and 5-amino-6-(D-ribitylamino)uracil: step 1/2. Catalyzes the formation of 6,7-dimethyl-8-ribityllumazine by condensation of 5-amino-6-(D-ribitylamino)uracil with 3,4-dihydroxy-2-butanone 4-phosphate. This is the penultimate step in the biosynthesis of riboflavin. The isozyme RibH2 but not RibH1 is essential for Brucella intracellular survival and replication inside macrophages or in mice. Displays low catalytic activity in comparison with the isozyme RibH1. Is a highly immunogenic protein. Activates dendritic cells (DCs) in vitro, increasing the levels of costimulatory molecules and the secretion of pro-inflammatory cytokines, and recruits DCs, B cells and CD8+ T cells in vivo, both effects in a TLR4-dependent manner. Induces the cross presentation of covalently attached peptides and generates a strong and long-lasting humoral immune response without adjuvants; TLR4 signaling is necessary for the induction of the cytotoxic response but not for antigen cross presentation. Elicits a TLR4-mediated protective response against B16 melanoma in mice, slowing tumor growth and prolonging mice survival. The polypeptide is 6,7-dimethyl-8-ribityllumazine synthase 2 (Brucella abortus (strain 2308)).